A 366-amino-acid polypeptide reads, in one-letter code: Aminomethyltransferase (366 aa).

The protein belongs to the GcvT family. In terms of assembly, the glycine cleavage system is composed of four proteins: P, T, L and H.

It carries out the reaction N(6)-[(R)-S(8)-aminomethyldihydrolipoyl]-L-lysyl-[protein] + (6S)-5,6,7,8-tetrahydrofolate = N(6)-[(R)-dihydrolipoyl]-L-lysyl-[protein] + (6R)-5,10-methylene-5,6,7,8-tetrahydrofolate + NH4(+). The glycine cleavage system catalyzes the degradation of glycine. The chain is Aminomethyltransferase from Bacillus cereus (strain ZK / E33L).